Consider the following 273-residue polypeptide: 2,3,4,5-tetrahydropyridine-2,6-dicarboxylate N-succinyltransferase (273 aa).

Residues Arg-104 and Asp-141 each contribute to the substrate site.

This sequence belongs to the transferase hexapeptide repeat family. Homotrimer.

The protein resides in the cytoplasm. It carries out the reaction (S)-2,3,4,5-tetrahydrodipicolinate + succinyl-CoA + H2O = (S)-2-succinylamino-6-oxoheptanedioate + CoA. It functions in the pathway amino-acid biosynthesis; L-lysine biosynthesis via DAP pathway; LL-2,6-diaminopimelate from (S)-tetrahydrodipicolinate (succinylase route): step 1/3. The protein is 2,3,4,5-tetrahydropyridine-2,6-dicarboxylate N-succinyltransferase of Buchnera aphidicola subsp. Schizaphis graminum (strain Sg).